Here is a 433-residue protein sequence, read N- to C-terminus: C2H2 type master regulator of conidiophore development brlA (433 aa).

Disordered regions lie at residues 23-54 and 238-268; these read PSECPSMTSSFSPLDSPTPTPTSLYSQGSMAS and TFKSHTPSTPHRSVSMGTPSGSDTPVSRMSG. Residues 30-48 are compositionally biased toward low complexity; it reads TSSFSPLDSPTPTPTSLYS. Over residues 238 to 264 the composition is skewed to polar residues; that stretch reads TFKSHTPSTPHRSVSMGTPSGSDTPVS. 2 C2H2-type zinc fingers span residues 321–345 and 351–376; these read FKCKEPGCKGRFKRQEHLKRHMKSH and HVCWVPGCHRAFSRSDNLNAHYTKTH. The tract at residues 391-423 is disordered; it reads ETSQDFDPDFRGQLTPDGRPIYGSKLEDSMPDC.

The protein resides in the nucleus. BrlA, abaA and wetA are pivotal regulators of conidiophore development and conidium maturation. They act individually and together to regulate their own expression and that of numerous other sporulation-specific genes. Binds promoters of target genes at brlA response elements (BREs) containing the conserved sequence 5'-(C/A)(A/G)AGGG(G/A)-3'. The chain is C2H2 type master regulator of conidiophore development brlA from Penicillium camemberti (strain FM 013).